A 400-amino-acid chain; its full sequence is tRNA pseudouridine synthase Pus10 (400 aa).

Residues 77–194 (QVYVELFGSP…DGSVSVQPRR (118 aa)) form the THUMP domain. Residue Tyr301 coordinates substrate.

Belongs to the pseudouridine synthase Pus10 family.

It carries out the reaction uridine(54) in tRNA = pseudouridine(54) in tRNA. The enzyme catalyses uridine(55) in tRNA = pseudouridine(55) in tRNA. Functionally, responsible for synthesis of pseudouridine from uracil-54 and uracil-55 in the psi GC loop of transfer RNAs. The chain is tRNA pseudouridine synthase Pus10 from Acidilobus saccharovorans (strain DSM 16705 / JCM 18335 / VKM B-2471 / 345-15).